Reading from the N-terminus, the 350-residue chain is Transmembrane protein 185A (350 aa).

7 helical membrane passes run 16 to 36 (LIYACLLLFSVLLALRLDGII), 41 to 61 (WAVFAPIWLWKLMVIVGASVG), 81 to 101 (FKAMLIAVGIHLLLLMFEVLV), 111 to 131 (FWLLVFMPLFFVSPVSVAACV), 177 to 197 (ILMSFLCLVVLYYIVWSVLFL), 211 to 231 (ITMALSWMTIVVPLLTFEILL), and 240 to 260 (AFSCIPIFVPLWLSLITLMAT). The tract at residues 298–350 (DLHHEDNEETEETPVPEPPKIAPMFRKKARVVITQSPGKYALPPPKLNIEMPD) is mediates interaction with MAP1B.

Belongs to the TMEM185 family. In terms of assembly, interacts with MAP1B.

The protein localises to the cell projection. The protein resides in the dendrite. Its subcellular location is the membrane. This Pongo abelii (Sumatran orangutan) protein is Transmembrane protein 185A (TMEM185A).